Consider the following 164-residue polypeptide: Transcriptional repressor NrdR (164 aa).

The segment at 3–34 (CPKCNYNKSSVVDSRQAEDGNTIRRRRECEKC) is a zinc-finger region. In terms of domain architecture, ATP-cone spans 49–139 (LLVVKKDGTR…VYKSFKDVDE (91 aa)).

The protein belongs to the NrdR family. Requires Zn(2+) as cofactor.

Functionally, negatively regulates transcription of bacterial ribonucleotide reductase nrd genes and operons by binding to NrdR-boxes. This Streptococcus uberis (strain ATCC BAA-854 / 0140J) protein is Transcriptional repressor NrdR.